The following is a 498-amino-acid chain: GTPase Der (498 aa).

EngA-type G domains lie at 3–167 (PVVA…FDDL) and 210–383 (IKLA…KSAT). GTP-binding positions include 9 to 16 (GRPNVGKS), 57 to 61 (DTGGI), 119 to 122 (NKID), 216 to 223 (GRPNVGKS), 263 to 267 (DTAGV), and 328 to 331 (NKWD). In terms of domain architecture, KH-like spans 384-468 (TRVGTSVLTR…PIRINFQNSE (85 aa)).

The protein belongs to the TRAFAC class TrmE-Era-EngA-EngB-Septin-like GTPase superfamily. EngA (Der) GTPase family. In terms of assembly, associates with the 50S ribosomal subunit.

Its function is as follows. GTPase that plays an essential role in the late steps of ribosome biogenesis. The protein is GTPase Der of Vibrio parahaemolyticus serotype O3:K6 (strain RIMD 2210633).